The chain runs to 268 residues: UPF0354 protein OB2234 (268 aa).

Belongs to the UPF0354 family.

The protein is UPF0354 protein OB2234 of Oceanobacillus iheyensis (strain DSM 14371 / CIP 107618 / JCM 11309 / KCTC 3954 / HTE831).